A 214-amino-acid polypeptide reads, in one-letter code: LexA repressor (214 aa).

The H-T-H motif DNA-binding region spans 28–48 (IRDIQRELSISSTSVVAYNLR). Active-site for autocatalytic cleavage activity residues include serine 133 and lysine 172.

Belongs to the peptidase S24 family. As to quaternary structure, homodimer.

It carries out the reaction Hydrolysis of Ala-|-Gly bond in repressor LexA.. Represses a number of genes involved in the response to DNA damage (SOS response), including recA and lexA. In the presence of single-stranded DNA, RecA interacts with LexA causing an autocatalytic cleavage which disrupts the DNA-binding part of LexA, leading to derepression of the SOS regulon and eventually DNA repair. The chain is LexA repressor from Herpetosiphon aurantiacus (strain ATCC 23779 / DSM 785 / 114-95).